We begin with the raw amino-acid sequence, 346 residues long: D-fructose 1,6-bisphosphatase class 2/sedoheptulose 1,7-bisphosphatase 1 (346 aa).

Residues Asp33, Glu57, Asp97, and Glu100 each coordinate Mn(2+). Substrate contacts are provided by residues 100–102 (EGT), Tyr131, 176–178 (RAR), and 198–200 (DGD). Glu225 serves as a coordination point for Mn(2+).

This sequence belongs to the FBPase class 2 family. As to quaternary structure, homotetramer. Requires Mn(2+) as cofactor.

The enzyme catalyses beta-D-fructose 1,6-bisphosphate + H2O = beta-D-fructose 6-phosphate + phosphate. The catalysed reaction is D-sedoheptulose 1,7-bisphosphate + H2O = D-sedoheptulose 7-phosphate + phosphate. It functions in the pathway carbohydrate biosynthesis; Calvin cycle. Functionally, catalyzes the hydrolysis of fructose 1,6-bisphosphate (Fru 1,6-P2) and sedoheptulose 1,7-bisphosphate (Sed 1,7-P2) to fructose 6-phosphate and sedoheptulose 7-phosphate, respectively. The sequence is that of D-fructose 1,6-bisphosphatase class 2/sedoheptulose 1,7-bisphosphatase 1 from Acaryochloris marina (strain MBIC 11017).